Consider the following 283-residue polypeptide: Extracellular metalloprotease MGG_08041 (283 aa).

Positions 1 to 22 are cleaved as a signal peptide; it reads MQINVVKTFLFALAASSVSALA. Asn-55 is a glycosylation site (N-linked (GlcNAc...) asparagine). His-197 lines the Zn(2+) pocket. Glu-198 is an active-site residue. His-201 serves as a coordination point for Zn(2+). Cys-233 and Cys-260 are oxidised to a cystine.

This sequence belongs to the peptidase M43B family.

The protein resides in the secreted. Its function is as follows. Secreted metalloproteinase that allows assimilation of proteinaceous substrates. The sequence is that of Extracellular metalloprotease MGG_08041 from Pyricularia oryzae (strain 70-15 / ATCC MYA-4617 / FGSC 8958) (Rice blast fungus).